Consider the following 58-residue polypeptide: Large ribosomal subunit protein uL30 (58 aa).

Belongs to the universal ribosomal protein uL30 family. In terms of assembly, part of the 50S ribosomal subunit.

This chain is Large ribosomal subunit protein uL30, found in Erythrobacter litoralis (strain HTCC2594).